Here is a 217-residue protein sequence, read N- to C-terminus: Fucoxanthin-chlorophyll a-c binding protein A, chloroplastic (217 aa).

A chloroplast-targeting transit peptide spans 1 to 39 (MKSAVMAVACAAAPGLRRPSAFNGAALTTSAKSSSAMKM). 3 helical membrane-spanning segments follow: residues 81–101 (IAMLAIAGHLTQQNARLPGML), 122–142 (IPPAGLAQIFAFIGFLELAVM), and 183–203 (GRAAQMGILALMVHEELNNKP).

This sequence belongs to the fucoxanthin chlorophyll protein family. As to quaternary structure, the LHC complex of chromophytic algae is composed of fucoxanthin, chlorophyll A and C bound non-covalently by fucoxanthin chlorophyll proteins (FCPs). The ratio of pigments in this LHC is; fucoxanthin: chlorophyll C: chlorophyll A; (0.6-1): (0.1-0.3): (1).

It is found in the plastid. The protein localises to the chloroplast thylakoid membrane. Its function is as follows. The light-harvesting complex (LHC) functions as a light receptor, it captures and delivers excitation energy to photosystems with which it is closely associated. Energy is transferred from the carotenoid and chlorophyll C (or B) to chlorophyll A and the photosynthetic reaction centers where it is used to synthesize ATP and reducing power. In Macrocystis pyrifera (Giant kelp), this protein is Fucoxanthin-chlorophyll a-c binding protein A, chloroplastic (FCPA).